Consider the following 917-residue polypeptide: Glutamate receptor (917 aa).

Residues M1–S19 form the signal peptide. At T20–S556 the chain is on the extracellular side. N62, N95, N121, N125, N229, N251, N261, N272, N418, N419, N424, and N491 each carry an N-linked (GlcNAc...) asparagine glycan. The chain crosses the membrane as a helical span at residues S557 to V577. Topologically, residues S578–S631 are cytoplasmic. The chain crosses the membrane as a helical span at residues V632 to L652. The Extracellular portion of the chain corresponds to T653 to N818. Residue N775 is glycosylated (N-linked (GlcNAc...) asparagine). The helical transmembrane segment at V819–F839 threads the bilayer. Over E840–V917 the chain is Cytoplasmic. Residues H871–T896 are disordered.

Belongs to the glutamate-gated ion channel (TC 1.A.10.1) family.

It localises to the cell membrane. Its subcellular location is the postsynaptic cell membrane. Receptor for glutamate. L-glutamate acts as an excitatory neurotransmitter at many synapses in the central nervous system. The postsynaptic actions of Glu are mediated by a variety of receptors. The polypeptide is Glutamate receptor (Lymnaea stagnalis (Great pond snail)).